A 141-amino-acid polypeptide reads, in one-letter code: uncharacterized protein (141 aa).

Its subcellular location is the mitochondrion. This is an uncharacterized protein from Arabidopsis thaliana (Mouse-ear cress).